Here is a 353-residue protein sequence, read N- to C-terminus: UDP-xylose transporter 2 (353 aa).

10 consecutive transmembrane segments (helical) span residues 7–27 (FQLG…SIVI), 31–51 (ALIS…HLLV), 75–95 (VLGF…SLGF), 100–120 (FYQM…TIFF), 132–152 (LVIL…LNML), 154–174 (SVLS…TNTI), 194–214 (AITL…QNVF), 224–244 (FFIV…FLVI), 250–270 (VTYQ…GYLL), and 280–300 (ILGI…CTLE). Positions 308–353 (TSTQLPQMDENEKDPLVSAENGSGLISDNGVQKQDPVWNSNKDFQA) are disordered. Polar residues predominate over residues 327 to 353 (ENGSGLISDNGVQKQDPVWNSNKDFQA). Phosphoserine is present on serine 334.

The protein belongs to the TPT transporter family. TPT (TC 2.A.7.9) subfamily. As to expression, ubiquitous.

Its subcellular location is the golgi apparatus membrane. Nucleotide-sugar transporter that transports UDP-xylose and UMP in a strict counter-exchange mode. This Arabidopsis thaliana (Mouse-ear cress) protein is UDP-xylose transporter 2.